We begin with the raw amino-acid sequence, 584 residues long: N(6)-adenosine-methyltransferase subunit METTL3 (584 aa).

2 disordered regions span residues 1–65 (MSDT…EHPP) and 162–221 (KADD…SNKV). Residues 187–204 (RKSSVSLATASISQLTAS) show a composition bias toward polar residues. The Nuclear localization signal motif lies at 213-220 (DKKGRSNK). S-adenosyl-L-methionine-binding positions include 381–382 (DI) and Asp-399. Positions 400-414 (PPWDIHMELPYGTLT) are gate loop 1. Interaction with METTL14 regions lie at residues 454-458 (DRVDE) and 468-484 (QRII…NHGK). Residues 466–483 (QLQRIIRTGRTGHWLNHG) form an interphase loop region. The segment at 469-482 (RIIRTGRTGHWLNH) is positively charged region required for RNA-binding. The gate loop 2 stretch occupies residues 511-519 (VRSTSHKPD). Residues Lys-517, 540–543 (RPHN), and 553–554 (NQ) contribute to the S-adenosyl-L-methionine site.

It belongs to the MT-A70-like family. As to quaternary structure, heterodimer; heterodimerizes with mettl14 to form an antiparallel heterodimer that constitutes an active methyltransferase. Component of the WMM complex, a N6-methyltransferase complex composed of a catalytic subcomplex, named MAC, and of an associated subcomplex, named MACOM. The MAC subcomplex is composed of mettl3 and mettl14. As to expression, expressed in the hemato-vascular system: enriched in sorted endothelial cells and haemogenic endothelium.

The protein localises to the nucleus. Its subcellular location is the nucleus speckle. The protein resides in the cytoplasm. It carries out the reaction an adenosine in mRNA + S-adenosyl-L-methionine = an N(6)-methyladenosine in mRNA + S-adenosyl-L-homocysteine + H(+). Its function is as follows. The METTL3-METTL14 heterodimer forms a N6-methyltransferase complex that methylates adenosine residues at the N(6) position of some RNAs and regulates various processes such as the circadian clock, differentiation of embryonic and hematopoietic stem cells, cortical neurogenesis, response to DNA damage, differentiation of T-cells and primary miRNA processing. In the heterodimer formed with mettl14, mettl3 constitutes the catalytic core. N6-methyladenosine (m6A), which takes place at the 5'-[AG]GAC-3' consensus sites of some mRNAs, plays a role in mRNA stability, processing and translation efficiency. M6A is also involved in hematopoietic stem cells specification: m6A methylation and subsequent destabilization of mRNAs, such as notch1a, leads to decreased Notch signaling, promoting endothelial to hematopoietic transition. M6A also takes place in other RNA molecules, such as primary miRNA (pri-miRNAs). Mediates methylation of pri-miRNAs. The sequence is that of N(6)-adenosine-methyltransferase subunit METTL3 from Danio rerio (Zebrafish).